The chain runs to 164 residues: Nucleotide-binding protein Helmi_22490 (164 aa).

It belongs to the YajQ family.

Its function is as follows. Nucleotide-binding protein. This Heliobacterium modesticaldum (strain ATCC 51547 / Ice1) protein is Nucleotide-binding protein Helmi_22490.